Reading from the N-terminus, the 468-residue chain is Tyrosine-protein phosphatase YopH (468 aa).

Positions 127–194 are disordered; it reads ARGHVSSHSH…TVSPYGPEAR (68 aa). The segment covering 130 to 140 has biased composition (low complexity); it reads HVSSHSHSVLH. The region spanning 152–461 is the Tyrosine-protein phosphatase domain; it reads SHLDPRTPPL…DVLIKLAEGQ (310 aa). The Phosphocysteine intermediate role is filled by Cys-403.

It belongs to the protein-tyrosine phosphatase family. Non-receptor class subfamily. In terms of assembly, monomer.

The protein resides in the secreted. It catalyses the reaction O-phospho-L-tyrosyl-[protein] + H2O = L-tyrosyl-[protein] + phosphate. Its function is as follows. Essential virulence determinant. This protein is a protein tyrosine phosphatase. The essential function of YopH in Yersinia pathogenesis is host-protein dephosphorylation. It contributes to the ability of the bacteria to resist phagocytosis by peritoneal macrophages. This chain is Tyrosine-protein phosphatase YopH (yopH), found in Yersinia enterocolitica.